Reading from the N-terminus, the 125-residue chain is MATFKLVISNPKNGVAKQVEISGPEADKLIGRRIGEEIPASELGLNLSEIFGEEIPADAKLKITGGTDKDGFPMRPDVHGPRRVKILLSRGPGFRPRERGERRKKTVHGNTISPNIVQVNMKIVF.

The protein belongs to the eukaryotic ribosomal protein eS6 family. Part of the 30S ribosomal subunit.

This is Small ribosomal subunit protein eS6 from Thermococcus kodakarensis (strain ATCC BAA-918 / JCM 12380 / KOD1) (Pyrococcus kodakaraensis (strain KOD1)).